Consider the following 161-residue polypeptide: Peroxynitrite isomerase 2 (161 aa).

The GXWXGXG motif lies at 17–23; that stretch reads GTWTGRG. A heme b-binding site is contributed by His-152.

It belongs to the nitrobindin family. Homodimer. Heme b serves as cofactor.

It catalyses the reaction peroxynitrite = nitrate. The protein operates within nitrogen metabolism. Its function is as follows. Heme-binding protein able to scavenge peroxynitrite and to protect free L-tyrosine against peroxynitrite-mediated nitration, by acting as a peroxynitrite isomerase that converts peroxynitrite to nitrate. Therefore, this protein likely plays a role in peroxynitrite sensing and in the detoxification of reactive nitrogen and oxygen species (RNS and ROS, respectively). Is able to bind nitric oxide (NO) in vitro, but may act as a sensor of peroxynitrite levels in vivo. The chain is Peroxynitrite isomerase 2 from Mycobacterium avium (strain 104).